The sequence spans 441 residues: Protein C-ets-1 (441 aa).

N6-acetyllysine; alternate is present on residues Lys-8 and Lys-15. Residues Lys-8 and Lys-15 each participate in a glycyl lysine isopeptide (Lys-Gly) (interchain with G-Cter in SUMO2); alternate cross-link. Thr-38 carries the post-translational modification Phosphothreonine; by MAPK. The PNT domain occupies 51–136 (ATFSGFTKEQ…EHLEILQKED (86 aa)). The interval 130 to 243 (EILQKEDVKP…DNMCMGRTSR (114 aa)) is activation domain; required for transcription activation. Residue Lys-138 forms a Glycyl lysine isopeptide (Lys-Gly) (interchain with G-Cter in SUMO2) linkage. Tyr-223 is subject to Phosphotyrosine. A Glycyl lysine isopeptide (Lys-Gly) (interchain with G-Cter in SUMO) cross-link involves residue Lys-227. 2 positions are modified to phosphoserine: Ser-251 and Ser-254. At Thr-265 the chain carries Phosphothreonine. Phosphoserine occurs at positions 267, 270, 282, and 285. Positions 304–312 (FKDYVRDRA) are helix HI-1. Lys-305 carries the post-translational modification N6-acetyllysine. Positions 323 to 330 (AAALAGYT) are helix HI-2. The ETS DNA-binding region spans 335–415 (IQLWQFLLEL…AGKRYVYRFV (81 aa)). A helix H4 region spans residues 418 to 422 (LQSLL). The helix H5 stretch occupies residues 426–432 (PEELHAM).

The protein belongs to the ETS family. As to quaternary structure, binds DNA as a homodimer; homodimerization is required for transcription activation. Interacts with MAF and MAFB. Interacts with PAX5; the interaction alters DNA-binding properties. Interacts with DAXX. Interacts with UBE2I. Interacts with SP100; the interaction is direct and modulates ETS1 transcriptional activity. Sumoylated on Lys-15 and Lys-227, preferentially with SUMO2; which inhibits transcriptional activity. Post-translationally, ubiquitinated; which induces proteasomal degradation. In terms of processing, phosphorylation at Ser-251, Ser-282 and Ser-285 by CaMK2/CaMKII in response to calcium signaling decreases affinity for DNA: an increasing number of phosphoserines causes DNA-binding to become progressively weaker. Highly expressed within lymphoid cells. Isoforms c-ETS-1A and Ets-1 p27 are both detected in all fetal tissues tested, but vary with tissue type in adult tissues. None is detected in brain or kidney.

It localises to the nucleus. Its subcellular location is the cytoplasm. Its activity is regulated as follows. Autoinhibited by a module composed of four alpha helices (HI-1, HI-2, H4, and H5) that flank the DNA-binding ETS domain, reducing the affinity for DNA. Phosphorylation by CaMK2/CaMKII in response to calcium signaling decreases affinity for DNA. In terms of biological role, transcription factor. Directly controls the expression of cytokine and chemokine genes in a wide variety of different cellular contexts. May control the differentiation, survival and proliferation of lymphoid cells. May also regulate angiogenesis through regulation of expression of genes controlling endothelial cell migration and invasion. Acts as a dominant-negative for isoform c-ETS-1A. This is Protein C-ets-1 (ETS1) from Homo sapiens (Human).